The following is a 633-amino-acid chain: MAHLKRLVKLHIKRHYHKKFWKLGAVIFFFIIVLVLMQREVSVQYSKEESRMERNMKNKNKMLDLMLEAVNNIKDAMPKMQIGAPVRQNIDAGERPCLQGYYTAAELKPVLDRPPQDSNAPGASGKAFKTTNLSVEEQKEKERGEAKHCFNAFASDRISLHRDLGPDTRPPECIEQKFKRCPPLPTTSVIIVFHNEAWSTLLRTVHSVLYSSPAILLKEIILVDDASVDEYLHDKLDEYVKQFSIVKIVRQRERKGLITARLLGATVATAETLTFLDAHCECFYGWLEPLLARIAENYTAVVSPDIASIDLNTFEFNKPSPYGSNHNRGNFDWSLSFGWESLPDHEKQRRKDETYPIKTPTFAGGLFSISKEYFEYIGSYDEEMEIWGGENIEMSFRVWQCGGQLEIMPCSVVGHVFRSKSPHSFPKGTQVIARNQVRLAEVWMDEYKEIFYRRNTDAAKIVKQKAFGDLSKRFEIKHRLQCKNFTWYLNNIYPEVYVPDLNPVISGYIKSVGQPLCLDVGENNQGGKPLIMYTCHGLGGNQYFEYSAQHEIRHNIQKELCLHAAQGLVQLKACTYKGHKTVVTGEQIWEIQKDQLLYNPFLKMCLSANGEHPSLVSCNPSDPLQKWILSQND.

Topologically, residues 1 to 19 (MAHLKRLVKLHIKRHYHKK) are cytoplasmic. The helical; Signal-anchor for type II membrane protein transmembrane segment at 20–37 (FWKLGAVIFFFIIVLVLM) threads the bilayer. The Lumenal portion of the chain corresponds to 38 to 633 (QREVSVQYSK…LQKWILSQND (596 aa)). N132 carries N-linked (GlcNAc...) asparagine glycosylation. The interval 184 to 293 (LPTTSVIIVF…YGWLEPLLAR (110 aa)) is catalytic subdomain A. Residues D277 and H279 each coordinate Mn(2+). N297 carries N-linked (GlcNAc...) asparagine glycosylation. The catalytic subdomain B stretch occupies residues 356 to 418 (PIKTPTFAGG…PCSVVGHVFR (63 aa)). H415 is a Mn(2+) binding site. N484 carries an N-linked (GlcNAc...) asparagine glycan. The Ricin B-type lectin domain maps to 504–630 (VISGYIKSVG…SDPLQKWILS (127 aa)). The cysteines at positions 517 and 535 are disulfide-linked. The UDP-N-acetyl-alpha-D-galactosamine site is built by D519, E522, H536, and N541. Intrachain disulfides connect C561–C574 and C605–C618.

Belongs to the glycosyltransferase 2 family. GalNAc-T subfamily. Mn(2+) is required as a cofactor. As to expression, expressed in organs that contain secretory epithelial glands. Highly expressed in pancreas, skin, kidney and testis. Weakly expressed in prostate, ovary, intestine and colon. Also expressed in placenta and lung and fetal lung and fetal kidney.

Its subcellular location is the golgi apparatus. It is found in the golgi stack membrane. The catalysed reaction is L-seryl-[protein] + UDP-N-acetyl-alpha-D-galactosamine = a 3-O-[N-acetyl-alpha-D-galactosaminyl]-L-seryl-[protein] + UDP + H(+). The enzyme catalyses L-threonyl-[protein] + UDP-N-acetyl-alpha-D-galactosamine = a 3-O-[N-acetyl-alpha-D-galactosaminyl]-L-threonyl-[protein] + UDP + H(+). It participates in protein modification; protein glycosylation. In terms of biological role, catalyzes the initial reaction in O-linked oligosaccharide biosynthesis, the transfer of an N-acetyl-D-galactosamine residue to a serine or threonine residue on the protein receptor. Has activity toward HIV envelope glycoprotein gp120, EA2, MUC2, MUC1A and MUC5AC. Probably glycosylates fibronectin in vivo. Glycosylates FGF23. This is Polypeptide N-acetylgalactosaminyltransferase 3 (GALNT3) from Homo sapiens (Human).